A 470-amino-acid polypeptide reads, in one-letter code: Glucose-1-phosphate adenylyltransferase (470 aa).

Alpha-D-glucose 1-phosphate contacts are provided by residues G164, E181–K182, and S199.

Belongs to the bacterial/plant glucose-1-phosphate adenylyltransferase family. As to quaternary structure, homotetramer.

The catalysed reaction is alpha-D-glucose 1-phosphate + ATP + H(+) = ADP-alpha-D-glucose + diphosphate. It functions in the pathway glycan biosynthesis; glycogen biosynthesis. Functionally, involved in the biosynthesis of ADP-glucose, a building block required for the elongation reactions to produce glycogen. Catalyzes the reaction between ATP and alpha-D-glucose 1-phosphate (G1P) to produce pyrophosphate and ADP-Glc. The sequence is that of Glucose-1-phosphate adenylyltransferase from Pseudarthrobacter chlorophenolicus (strain ATCC 700700 / DSM 12829 / CIP 107037 / JCM 12360 / KCTC 9906 / NCIMB 13794 / A6) (Arthrobacter chlorophenolicus).